The chain runs to 589 residues: Aspartate--tRNA(Asp/Asn) ligase (589 aa).

Glutamate 170 is an L-aspartate binding site. An aspartate region spans residues 194–197 (QLFK). Arginine 216 is an L-aspartate binding site. Residues 216–218 (RDE) and glutamine 225 each bind ATP. Histidine 448 lines the L-aspartate pocket. Glutamate 482 contributes to the ATP binding site. Residue arginine 489 participates in L-aspartate binding. 534 to 537 (GWDR) contributes to the ATP binding site. The interval 563–589 (PLTDAPASITAQQRKESGIDTKPKEVE) is disordered. Positions 575–589 (QRKESGIDTKPKEVE) are enriched in basic and acidic residues.

It belongs to the class-II aminoacyl-tRNA synthetase family. Type 1 subfamily. Homodimer.

The protein localises to the cytoplasm. It carries out the reaction tRNA(Asx) + L-aspartate + ATP = L-aspartyl-tRNA(Asx) + AMP + diphosphate. Its function is as follows. Aspartyl-tRNA synthetase with relaxed tRNA specificity since it is able to aspartylate not only its cognate tRNA(Asp) but also tRNA(Asn). Reaction proceeds in two steps: L-aspartate is first activated by ATP to form Asp-AMP and then transferred to the acceptor end of tRNA(Asp/Asn). The sequence is that of Aspartate--tRNA(Asp/Asn) ligase from Mycobacterium leprae (strain Br4923).